The sequence spans 678 residues: Amino-acid acetyltransferase, mitochondrial (678 aa).

The tract at residues 86–111 is disordered; that stretch reads LKAQHPPKAQTEPTTGHSKGTVTQSL. A compositionally biased stretch (polar residues) spans 96-111; sequence TEPTTGHSKGTVTQSL. Residues 499–668 enclose the N-acetyltransferase domain; that stretch reads NRPRLSLDDP…YEQVCRSIQP (170 aa).

It belongs to the acetyltransferase family.

It localises to the mitochondrion. It catalyses the reaction L-glutamate + acetyl-CoA = N-acetyl-L-glutamate + CoA + H(+). It functions in the pathway amino-acid biosynthesis; L-arginine biosynthesis; N(2)-acetyl-L-ornithine from L-glutamate: step 1/4. Functionally, N-acetylglutamate synthase involved in arginine biosynthesis. This is Amino-acid acetyltransferase, mitochondrial (arg2) from Aspergillus oryzae (strain ATCC 42149 / RIB 40) (Yellow koji mold).